We begin with the raw amino-acid sequence, 336 residues long: MNLAIIAGDGIGPEVIGEAVKVLDAVLPEVEKTTYDLGARRYHATGEILPDSVLEELKVHDAILLGAIGDPSVPSGVLERGLLLRIRFALDHHINLRPAKLYSGVTGPLAGNPEIDFVVVREGTEGPYTGTGGAIRVGTPHEVATEVSLNTAFGVRRVVEDAFRRAQQRRKHLTLVHKNNVLTFAGALWWRTVQEVGAEYPDVEIAYQHVDSAMIHIVTDPGRFDVIVTDNLFGDIVTDLAAAVCGGIGLAASGNIDATRTNPSMFEPVHGSAPDIAGQGIADPTAAIMSVALLLAHVGETDAAARVDKAVEAHLSSRGDQELGTAAVGDRIVGLL.

Substrate contacts are provided by R87, R97, R121, and D211. Mg(2+) contacts are provided by D211, D235, and D239. 271-283 is an NAD(+) binding site; that stretch reads GSAPDIAGQGIAD.

Belongs to the isocitrate and isopropylmalate dehydrogenases family. LeuB type 2 subfamily. In terms of assembly, homodimer. It depends on Mg(2+) as a cofactor. Mn(2+) serves as cofactor.

The protein localises to the cytoplasm. The catalysed reaction is (2R,3S)-3-isopropylmalate + NAD(+) = 4-methyl-2-oxopentanoate + CO2 + NADH. It functions in the pathway amino-acid biosynthesis; L-leucine biosynthesis; L-leucine from 3-methyl-2-oxobutanoate: step 3/4. In terms of biological role, catalyzes the oxidation of 3-carboxy-2-hydroxy-4-methylpentanoate (3-isopropylmalate) to 3-carboxy-4-methyl-2-oxopentanoate. The product decarboxylates to 4-methyl-2 oxopentanoate. This is 3-isopropylmalate dehydrogenase from Mycobacterium sp. (strain JLS).